A 140-amino-acid polypeptide reads, in one-letter code: Nucleoside diphosphate kinase (140 aa).

K11, F59, R87, T93, R104, and N114 together coordinate ATP. H117 (pros-phosphohistidine intermediate) is an active-site residue.

Belongs to the NDK family. In terms of assembly, homotetramer. The cofactor is Mg(2+).

The protein resides in the cytoplasm. The catalysed reaction is a 2'-deoxyribonucleoside 5'-diphosphate + ATP = a 2'-deoxyribonucleoside 5'-triphosphate + ADP. It carries out the reaction a ribonucleoside 5'-diphosphate + ATP = a ribonucleoside 5'-triphosphate + ADP. In terms of biological role, major role in the synthesis of nucleoside triphosphates other than ATP. The ATP gamma phosphate is transferred to the NDP beta phosphate via a ping-pong mechanism, using a phosphorylated active-site intermediate. The sequence is that of Nucleoside diphosphate kinase from Bradyrhizobium sp. (strain BTAi1 / ATCC BAA-1182).